The following is a 384-amino-acid chain: 8-amino-7-oxononanoate synthase (384 aa).

Arg21 is a binding site for substrate. 108-109 contributes to the pyridoxal 5'-phosphate binding site; it reads GF. Residue His133 coordinates substrate. Residues Ser179, His207, and Thr233 each coordinate pyridoxal 5'-phosphate. Position 236 is an N6-(pyridoxal phosphate)lysine (Lys236). Thr352 lines the substrate pocket.

Belongs to the class-II pyridoxal-phosphate-dependent aminotransferase family. BioF subfamily. Homodimer. Pyridoxal 5'-phosphate is required as a cofactor.

The catalysed reaction is 6-carboxyhexanoyl-[ACP] + L-alanine + H(+) = (8S)-8-amino-7-oxononanoate + holo-[ACP] + CO2. It participates in cofactor biosynthesis; biotin biosynthesis. Functionally, catalyzes the decarboxylative condensation of pimeloyl-[acyl-carrier protein] and L-alanine to produce 8-amino-7-oxononanoate (AON), [acyl-carrier protein], and carbon dioxide. The protein is 8-amino-7-oxononanoate synthase of Escherichia coli O8 (strain IAI1).